Consider the following 132-residue polypeptide: DNA-directed RNA polymerase subunit Rpo8 (132 aa).

This sequence belongs to the archaeal Rpo8 RNA polymerase subunit family. In terms of assembly, part of the 13-subunit RNA polymerase complex.

It is found in the cytoplasm. The enzyme catalyses RNA(n) + a ribonucleoside 5'-triphosphate = RNA(n+1) + diphosphate. Its function is as follows. DNA-dependent RNA polymerase (RNAP) catalyzes the transcription of DNA into RNA using the four ribonucleoside triphosphates as substrates. The protein is DNA-directed RNA polymerase subunit Rpo8 of Saccharolobus solfataricus (strain ATCC 35092 / DSM 1617 / JCM 11322 / P2) (Sulfolobus solfataricus).